Reading from the N-terminus, the 650-residue chain is Probable ATP-dependent RNA helicase DDX17 (650 aa).

The tract at residues 1–38 (MRGGGFGDRDRDRDRGGFGARGGSGLPPKKFGNPGERL) is disordered. Residues 7 to 16 (GDRDRDRDRG) are compositionally biased toward basic and acidic residues. K29, K30, and K42 each carry N6-acetyllysine. K50 is covalently cross-linked (Glycyl lysine isopeptide (Lys-Gly) (interchain with G-Cter in SUMO); alternate). Residue K50 forms a Glycyl lysine isopeptide (Lys-Gly) (interchain with G-Cter in SUMO1); alternate linkage. K50 is covalently cross-linked (Glycyl lysine isopeptide (Lys-Gly) (interchain with G-Cter in SUMO2); alternate). A Q motif motif is present at residues 92 to 120 (FAFHHANFPQYVMDVLMDQHFTEPTPIQC). The 176-residue stretch at 123-298 (FPLALSGRDM…EDFLRDYTQI (176 aa)) folds into the Helicase ATP-binding domain. 136 to 143 (AQTGSGKT) is a binding site for ATP. The short motif at 246–249 (DEAD) is the DEAD box element. Positions 326-473 (KLIQLMEEIM…AINPKLMQLV (148 aa)) constitute a Helicase C-terminal domain. T444 carries the phosphothreonine modification. A Glycyl lysine isopeptide (Lys-Gly) (interchain with G-Cter in SUMO2) cross-link involves residue K449. Residues 468-650 (KLMQLVDHRG…PPPPPPPSRK (183 aa)) form a transactivation domain region. Disordered regions lie at residues 472–543 (LVDH…YGSP) and 583–650 (ASST…PSRK). Over residues 489–499 (RTTSSANNPNL) the composition is skewed to polar residues. Residues 504–531 (ECDRRLRGVKDGGRRDSTSYRDRSETDR) are compositionally biased toward basic and acidic residues. The span at 583-609 (ASSTASAGRSSQSSSQQFSGIGRSGQQ) shows a compositional bias: low complexity. Omega-N-methylarginine is present on R605. The span at 610–619 (PQPLMSQQFA) shows a compositional bias: polar residues. A compositionally biased stretch (pro residues) spans 638-650 (YPPPPPPPPPSRK). Residues 639 to 647 (PPPPPPPPP) form an interaction with YAP1 region.

The protein belongs to the DEAD box helicase family. DDX5/DBP2 subfamily. As to quaternary structure, interacts with DDX5 in an RNA-independent manner. Interacts with CDK9 transcription elongation complex under basal conditions. Following cell stimulation with poly(I:C), a synthetic double-stranded RNA mimicking viral infection, the interaction with CDK9 is decreased. Interacts with ESR1 in an estrogen-independent manner. Interacts with HNRNPH1; this interaction is important for the regulation of alternative splicing on G-quadruplex structures. At high, but not low, cell density, interacts with DROSHA and DGCR8, the core components of the microprocessor complex involved in the maturation of primary microRNAs (pri-miRNAs) into pre-miRNAs. The interaction with DGCR8 is reduced during mitosis. At low, but not high, cell density, interacts with YAP1 and with its paralog, WWTR1/TAZ. Interactions with DROSHA and YAP1 are mutually exclusive. In vitro, the pre-miRNA processing activity of the DDX17-containing microprocessor complex is weaker than that of the DROSHA/DGCR8 microprocessor complex. Interacts with UPF3B. Interacts with NFAT5; this interaction leads to DDX17 recruitment to LNC2 and S100A4 promoters and NFAT5-mediated DDX17-enhanced transactivation. Interacts with HDAC1, HDAC2 and HDAC3; this interaction with HDAC1 and HDAC3, but not HDAC2, depends upon DDX17 acetylation. Interacts with ZC3HAV1 (via N-terminal domain) in an RNA-independent manner. Interacts with EXOSC3/RRP40 and EXOSC5/RRP46; this interaction may be indirect and mediated by ZC3HAV1-binding. Interacts with EP300; this interaction leads to acetylation at lysine residues. Interacts with CREBBP/CBP and KAT2B/P/CAF. Directly interacts with CTNNB1. Interacts with MYOD1. Interacts with TP53. Interacts with DCP1A in an RNA-independent manner. Interacts with DCP2 in an RNA-dependent manner. Interacts with DHX36; this interaction occurs in a RNA-dependent manner. Interacts with ERCC6. In terms of processing, sumoylation significantly increases stability. It also promotes interaction specifically with HDAC1 (but not HDAC2, nor HDAC3) and strongly stimulates ESR1 and TP53 coactivation. Acetylation at lysine residues stabilizes the protein, stimulates interaction with HDAC1 and HDAC3, but not HDAC2, and represses ESR1 and TP53 coactivation activity.

Its subcellular location is the nucleus. It localises to the nucleolus. The protein localises to the cytoplasm. The protein resides in the cytosol. It catalyses the reaction ATP + H2O = ADP + phosphate + H(+). Its function is as follows. As an RNA helicase, unwinds RNA and alters RNA structures through ATP binding and hydrolysis. Involved in multiple cellular processes, including pre-mRNA splicing, alternative splicing, ribosomal RNA processing and miRNA processing, as well as transcription regulation. Regulates the alternative splicing of exons exhibiting specific features. This function requires the RNA helicase activity. Affects NFAT5 and histone macro-H2A.1/MACROH2A1 alternative splicing in a CDK9-dependent manner. Affects splicing of mediators of steroid hormone signaling pathway, including kinases that phosphorylates ESR1 and transcriptional regulators. By acting splicing of regulatory factors, participates in ESR1 and AR stabilization. Promotes the inclusion of specific AC-rich alternative exons in CD44 transcripts. In myoblasts and epithelial cells, cooperates with HNRNPH1 to control the splicing of specific subsets of exons. In addition to binding mature mRNAs, also interacts with certain pri-microRNAs, including MIR132/miR-132, and stabilizes the primary transcript. Also participates in the MIR132 processing, resulting in significantly higher levels of mature MIR132 than MIR212 despite the fact that both are cotranscribed and co-regulated. Binding of pri-microRNAs may occur on the 3' segment flanking the stem loop via the 5'-[ACG]CAUC[ACU]-3' consensus sequence. Participates in MYC down-regulation at high cell density through the production of MYC-targeting microRNAs. Along with DDX5, may be involved in the processing of the 32S intermediate into the mature 28S rRNA. Promoter-specific transcription regulator, functioning as a coactivator or corepressor depending on the context of the promoter and the transcriptional complex in which it exists. Enhances NFAT5 transcriptional activity. Synergizes with TP53 in the activation of the MDM2 promoter; this activity requires acetylation on lysine residues. May also coactivate MDM2 transcription through a TP53-independent pathway. Coactivates MMP7 transcription. Along with CTNNB1, coactivates MYC, JUN, FOSL1 and cyclin D1/CCND1 transcription. Alone or in combination with DDX5 and/or SRA1 non-coding RNA, plays a critical role in promoting the assembly of proteins required for the formation of the transcription initiation complex and chromatin remodeling leading to coactivation of MYOD1-dependent transcription. This helicase-independent activity is required for skeletal muscle cells to properly differentiate into myotubes. During epithelial-to-mesenchymal transition, coregulates SMAD-dependent transcriptional activity, directly controlling key effectors of differentiation, including miRNAs which in turn directly repress its expression. Plays a role in estrogen and testosterone signaling pathway at several levels. Mediates the use of alternative promoters in estrogen-responsive genes and regulates transcription and splicing of a large number of steroid hormone target genes. Contrary to the splicing regulation activity, transcriptional coregulation of the estrogen receptor ESR1 is helicase activity-independent. Plays a role in innate immunity. Specifically restricts bunyavirus infection, including Rift Valley fever virus (RVFV) or La Crosse virus (LACV), but not vesicular stomatitis virus (VSV), in an interferon- and DROSHA-independent manner. Binds to RVFV RNA, likely via structured viral RNA elements. Promotes mRNA degradation mediated by the antiviral zinc-finger protein ZC3HAV1, in an ATPase-dependent manner. This is Probable ATP-dependent RNA helicase DDX17 (Ddx17) from Mus musculus (Mouse).